The sequence spans 47 residues: Snake venom metalloproteinase jararafibrase-4 (47 aa).

Residues 6 to 47 (RYIELFLVVDHGMFMKYNGNSDKIYYYIHQMVNIMKXAYXYL) form the Peptidase M12B domain. Glu9 contributes to the Ca(2+) binding site.

Belongs to the venom metalloproteinase (M12B) family. As to quaternary structure, monomer. Zn(2+) serves as cofactor. Expressed by the venom gland.

Its subcellular location is the secreted. Its activity is regulated as follows. Inhibited by 1,10-phenanthroline and EDTA. In terms of biological role, the metalloproteinase is a probable venom zinc protease that induces local hemorrhage in the skin of rats. Degrades type-IV collagen, gelatin, laminin and fibronectin. Has fibrinolytic activities. Has high hemagglutinating activity on red blood cells. Cleaves insulin B chain at 29-His-|-Leu-30, and 38-Ala-|-Leu-39 bonds. This chain is Snake venom metalloproteinase jararafibrase-4, found in Bothrops jararaca (Jararaca).